The sequence spans 118 residues: T cell receptor gamma variable 8 (118 aa).

The first 17 residues, 1 to 17, serve as a signal peptide directing secretion; sequence MLLALALLLAFLPPASQ. Residues 18–118 form the Ig-like domain; the sequence is KSSNLEGRTK…GVYYCATWDR (101 aa). Cys-41 and Cys-113 are oxidised to a cystine.

In terms of assembly, gamma-delta TR is a heterodimer composed of a gamma and delta chain; disulfide-linked. The gamma-delta TR is associated with the transmembrane signaling CD3 coreceptor proteins following the stoichiometry: a single gamma-delta TR heterodimer associates with one CD3D-CD3E heterodimer, one CD3G-CD3E heterodimer and one CD247 homodimer forming a stable octameric structure. Upon activation, gamma-delta TR complex associates with FCER1G to initiate intracellular signaling.

It is found in the cell membrane. V region of the variable domain of T cell receptor (TR) gamma chain that participates in the antigen recognition. Gamma-delta TRs recognize a variety of self and foreign non-peptide antigens frequently expressed at the epithelial boundaries between the host and external environment, including endogenous lipids presented by MH-like protein CD1D and phosphoantigens presented by butyrophilin-like molecule BTN3A1. Upon antigen recognition induces rapid, innate-like immune responses involved in pathogen clearance and tissue repair. Binding of gamma-delta TR complex to antigen triggers phosphorylation of immunoreceptor tyrosine-based activation motifs (ITAMs) in the CD3 chains by the LCK and FYN kinases, allowing the recruitment, phosphorylation, and activation of ZAP70 that facilitates phosphorylation of the scaffolding proteins LCP2 and LAT. This lead to the formation of a supramolecular signalosome that recruits the phospholipase PLCG1, resulting in calcium mobilization and ERK activation, ultimately leading to T cell expansion and differentiation into effector cells. Gamma-delta TRs are produced through somatic rearrangement of a limited repertoire of variable (V), diversity (D), and joining (J) genes. The potential diversity of gamma-delta TRs is conferred by the unique ability to rearrange (D) genes in tandem and to utilize all three reading frames. The combinatorial diversity is considerably increased by the sequence exonuclease trimming and random nucleotide (N) region additions which occur during the V-(D)-J rearrangements. This is T cell receptor gamma variable 8 from Homo sapiens (Human).